Consider the following 341-residue polypeptide: Thymidine kinase (341 aa).

19-26 provides a ligand contact to ATP; sequence GAYGIGKT. Glu-48 serves as the catalytic Proton acceptor. Tyr-66 and Gln-90 together coordinate substrate. Arg-183 serves as a coordination point for ATP. Arg-189 provides a ligand contact to substrate.

It belongs to the herpesviridae thymidine kinase family. Homodimer.

It carries out the reaction thymidine + ATP = dTMP + ADP + H(+). In terms of biological role, catalyzes the transfer of the gamma-phospho group of ATP to thymidine to generate dTMP in the salvage pathway of pyrimidine synthesis. The dTMP serves as a substrate for DNA polymerase during viral DNA replication. Allows the virus to be reactivated and to grow in non-proliferative cells lacking a high concentration of phosphorylated nucleic acid precursors. The protein is Thymidine kinase of Varicella-zoster virus (strain Dumas) (HHV-3).